Consider the following 437-residue polypeptide: MAEKPHMNLVVIGHVDHGKSTLVGHLLYRLGYIEEKKLKELEEQAKSRGKESFKFAWILDKMKEERERGITIDLTFMKFETKKYVFTIIDAPGHRDFVKNMITGASQADAAILVVSARKGEFEAGMSTEGQTREHLLLARTMGIEQIIVAVNKMDAPDVNYDQKRYEFVVSVLKKFMKGLGYQVDKIPFIPVSAWKGDNLIERSPNMPWYNGPTLVEALDQLQPPAKPVDKPLRIPVQNVYSIPGAGTVPVGRVETGVLRVGDKVVFMPPGVVGEVRSIEMHYQQLQQAEPGDNIGFAVRGVSKSDIKRGDVAGHLDKPPTVAEEFEARIFVIWHPSAITVGYTPVIHVHTASVSSRIIEIKAKLDPKTGQVVEQNPQFLKAGDAAIVRFKPVKPLVVEKFSEIPQLGRFAMRDMNRTVGIGIVTDVKPAKVDIKAK.

The tr-type G domain occupies 4 to 229 (KPHMNLVVIG…DQLQPPAKPV (226 aa)). The interval 13–20 (GHVDHGKS) is G1. Position 13-20 (13-20 (GHVDHGKS)) interacts with GTP. Mg(2+) is bound at residue serine 20. Positions 69–73 (GITID) are G2. Residues 90–93 (DAPG) are G3. Residues 90 to 94 (DAPGH) and 152 to 155 (NKMD) each bind GTP. The interval 152-155 (NKMD) is G4. The segment at 193-195 (SAW) is G5.

The protein belongs to the TRAFAC class translation factor GTPase superfamily. Classic translation factor GTPase family. EF-Tu/EF-1A subfamily.

It is found in the cytoplasm. The enzyme catalyses GTP + H2O = GDP + phosphate + H(+). In terms of biological role, GTP hydrolase that promotes the GTP-dependent binding of aminoacyl-tRNA to the A-site of ribosomes during protein biosynthesis. The protein is Elongation factor 1-alpha of Aeropyrum pernix (strain ATCC 700893 / DSM 11879 / JCM 9820 / NBRC 100138 / K1).